Reading from the N-terminus, the 182-residue chain is Caltractin ICL1b (182 aa).

A disordered region spans residues 1 to 31; sequence MSRRGQQPPPQQQQAPPQKNQAGKFNPAEFV. 4 EF-hand domains span residues 38–73, 74–109, 111–146, and 147–182; these read EEVL…LGFE, AKNQ…RISE, DSKA…LGET, and MDDS…KTFA. Ca(2+) contacts are provided by Asp51, Asp53, Thr55, Ser57, Glu62, Asp87, Asp89, Ser91, Gln93, and Glu98.

Belongs to the centrin family.

The protein localises to the cytoplasm. It localises to the cytoskeleton. In terms of biological role, plays a fundamental role in microtubule organizing center structure and function. Component of the infraciliary lattice (ICL) and the ciliary basal bodies. The sequence is that of Caltractin ICL1b (Icl1b) from Paramecium tetraurelia.